The sequence spans 203 residues: Arcadin-2 (203 aa).

As to quaternary structure, interacts with crenactin.

Its subcellular location is the cytoplasm. It localises to the cytoskeleton. Its function is as follows. Part of an actin-like archaeal cytoskeleton. Prevents polymerization of crenactin filaments by binding its C-terminus into crenactin's hydrophobic groove. May act by competing with the D-loop of the following crenactin subunit for the hydrophobic groove. This is Arcadin-2 from Pyrobaculum calidifontis (strain DSM 21063 / JCM 11548 / VA1).